A 109-amino-acid polypeptide reads, in one-letter code: Aquaporin-2 (109 aa).

Over serine 1–arginine 6 the chain is Cytoplasmic. Residues alanine 7–leucine 27 form a helical membrane-spanning segment. Residues asparagine 28–serine 35 lie on the Extracellular side of the membrane. Residues valine 36 to leucine 54 form a helical membrane-spanning segment. The Cytoplasmic portion of the chain corresponds to glycine 55 to glycine 59. Positions alanine 60–alanine 69 form an intramembrane region, discontinuously helical. The NPA 1 motif lies at asparagine 63 to alanine 65. Over cysteine 70 to arginine 80 the chain is Cytoplasmic. A helical transmembrane segment spans residues alanine 81 to leucine 102. Over threonine 103 to glycine 109 the chain is Extracellular.

Belongs to the MIP/aquaporin (TC 1.A.8) family. In terms of assembly, homotetramer. Serine phosphorylation is necessary and sufficient for expression at the apical membrane. Endocytosis is not phosphorylation-dependent. In terms of processing, N-glycosylated.

It localises to the apical cell membrane. It is found in the basolateral cell membrane. Its subcellular location is the cell membrane. The protein localises to the cytoplasmic vesicle membrane. The protein resides in the golgi apparatus. It localises to the trans-Golgi network membrane. The enzyme catalyses H2O(in) = H2O(out). It catalyses the reaction glycerol(in) = glycerol(out). Its function is as follows. Forms a water-specific channel that provides the plasma membranes of renal collecting duct with high permeability to water, thereby permitting water to move in the direction of an osmotic gradient. Plays an essential role in renal water homeostasis. Could also be permeable to glycerol. The protein is Aquaporin-2 of Elephas maximus (Indian elephant).